Reading from the N-terminus, the 83-residue chain is Keratin-associated protein 21-2 (83 aa).

Interacts with hair keratins.

Functionally, in the hair cortex, hair keratin intermediate filaments are embedded in an interfilamentous matrix, consisting of hair keratin-associated proteins (KRTAP), which are essential for the formation of a rigid and resistant hair shaft through their extensive disulfide bond cross-linking with abundant cysteine residues of hair keratins. The matrix proteins include the high-sulfur and high-glycine-tyrosine keratins. This chain is Keratin-associated protein 21-2 (KRTAP21-2), found in Homo sapiens (Human).